The primary structure comprises 341 residues: S-adenosylmethionine:tRNA ribosyltransferase-isomerase (341 aa).

It belongs to the QueA family. Monomer.

Its subcellular location is the cytoplasm. It carries out the reaction 7-aminomethyl-7-carbaguanosine(34) in tRNA + S-adenosyl-L-methionine = epoxyqueuosine(34) in tRNA + adenine + L-methionine + 2 H(+). It functions in the pathway tRNA modification; tRNA-queuosine biosynthesis. Functionally, transfers and isomerizes the ribose moiety from AdoMet to the 7-aminomethyl group of 7-deazaguanine (preQ1-tRNA) to give epoxyqueuosine (oQ-tRNA). This Staphylococcus epidermidis (strain ATCC 12228 / FDA PCI 1200) protein is S-adenosylmethionine:tRNA ribosyltransferase-isomerase.